Here is a 274-residue protein sequence, read N- to C-terminus: Long chain fatty acid elongase 5 (274 aa).

Over 1-23 the chain is Extracellular; the sequence is MMDQILGTNFTYEGAKEVARGLE. A helical membrane pass occupies residues 24–44; sequence GFSAKLAVGYIATIFGLKYYM. The Cytoplasmic segment spans residues 45 to 61; it reads KDRKAFDLSTPLNIWNG. A helical membrane pass occupies residues 62–82; the sequence is ILSTFSLLGFLFTFPTLLSVI. The Extracellular segment spans residues 83–105; the sequence is RKDGFSHTYSHVSELYTDSTSGY. Residues 106–126 form a helical membrane-spanning segment; that stretch reads WIFLWVISKIPELLDTVFIVL. Over 127-129 the chain is Cytoplasmic; sequence RKR. The helical transmembrane segment at 130-150 threads the bilayer; sequence PLIFMHWYHHALTGYYALVCY. The Extracellular portion of the chain corresponds to 151-156; it reads HEDAVH. A helical transmembrane segment spans residues 157-177; it reads MVWVVWMNYIIHAFMYGYYLL. Residues 178-187 are Cytoplasmic-facing; sequence KSLKVPIPPS. The chain crosses the membrane as a helical span at residues 188–208; that stretch reads VAQAITTSQMVQFAVAIFAQV. Topologically, residues 209-227 are extracellular; sequence HVSYKHYVEGVEGLAYSFR. A helical membrane pass occupies residues 228–248; it reads GTAIGFFMLTTYFYLWIQFYK. Residues 249 to 274 are Cytoplasmic-facing; sequence EHYLKNGGKKYNLAKDQAKTQTKKAN.

Belongs to the ELO family. As to expression, expressed in the gut and unidentified head cells.

The protein resides in the membrane. The enzyme catalyses 11-methyldodecanoyl-CoA + malonyl-CoA + H(+) = 3-oxoisopentadecanoyl-CoA + CO2 + CoA. It catalyses the reaction isopentadecanoyl-CoA + malonyl-CoA + H(+) = 3-oxoisoheptadecanoyl-CoA + CO2 + CoA. The protein operates within lipid metabolism; fatty acid biosynthesis. Functionally, catalyzes the first and rate-limiting reaction of the four reactions that constitute the long-chain fatty acids elongation cycle. Uses malonyl-CoA to add 2 carbons per cycle to the chain of long-chain fatty acids. Condensing enzyme required for the formation of isopentadecanoate (C15iso) and isoheptadecanoate (C17iso), both play critical roles in animal development and growth. This is Long chain fatty acid elongase 5 from Caenorhabditis elegans.